A 402-amino-acid polypeptide reads, in one-letter code: Multidrug resistance protein MdtH (402 aa).

The Cytoplasmic portion of the chain corresponds to 1-12 (MSRVSQARNLGK). Residues 13–33 (YFLLIDNMLVVLGFFVVFPLI) traverse the membrane as a helical segment. Over 34–98 (SIRFVDQMGW…GFATMGIAHE (65 aa)) the chain is Periplasmic. The chain crosses the membrane as a helical span at residues 99-116 (PWLLWFSCLLSGLGGTLF). The Cytoplasmic segment spans residues 117–138 (DPPRSALVVKLIRPQQRGRFFS). A helical membrane pass occupies residues 139–159 (LLMMQDSASAVIGALLGSWLL). At 160–164 (QYDFR) the chain is on the periplasmic side. A helical membrane pass occupies residues 165-185 (LVCATGAVLFVLCAAFNAWLL). Over 186 to 213 (PAWKLSTVRTPVREGMTRVMRDKRFVTY) the chain is Cytoplasmic. A helical transmembrane segment spans residues 214 to 234 (VLTLAGYYMLAVQVMLMLPIM). The Periplasmic portion of the chain corresponds to 235–243 (VNDVAGAPS). The chain crosses the membrane as a helical span at residues 244–264 (AVKWMYAIEACLSLTLLYPIA). The Cytoplasmic portion of the chain corresponds to 265-276 (RWSEKHFRLEHR). A helical membrane pass occupies residues 277-297 (LMAGLLIMSLSMMPVGMVSGL). The Periplasmic segment spans residues 298–299 (QQ). The helical transmembrane segment at 300–320 (LFTLICLFYIGSIIAEPARET) threads the bilayer. The Cytoplasmic segment spans residues 321-339 (LSASLADARARGSYMGFSR). Residues 340 to 360 (LGLAIGGAIGYIGGGWLFDLG) form a helical membrane-spanning segment. The Periplasmic portion of the chain corresponds to 361 to 367 (KSAHQPE). A helical transmembrane segment spans residues 368–388 (LPWMMLGIIGIFTFLALGWQF). Residues 389 to 402 (SQKRAARRLLERDA) lie on the Cytoplasmic side of the membrane.

It belongs to the major facilitator superfamily. DHA1 family. MdtH (TC 2.A.1.2.21) subfamily.

It is found in the cell inner membrane. The chain is Multidrug resistance protein MdtH from Shigella flexneri.